The chain runs to 771 residues: Solute carrier family 7 member 14 (771 aa).

A run of 6 helical transmembrane segments spans residues 58–78 (LISLGVGSCVGTGMYVVSGLV), 83–103 (AGPGVIVSFIIAAVASILSGV), 130–150 (FVAFFIGWNLILEYLIGTAAG), 187–207 (YPDLLALVIAIIVTIIVALGV), 216–236 (VLNVLNLAVWVFIMIAGFFFI), and 251–271 (WSGVLQGAATCFYAFIGFDII). An N-linked (GlcNAc...) asparagine glycan is attached at Asn282. 5 helical membrane passes run 291–311 (ASLVICLTAYVSVSMILTLMV), 336–356 (FVVAIGSVAGLTVSLLGSLFP), 360–380 (VIYAMAGDGLLFRFLAHVSSY), 384–404 (PVVACIVSGFLAALLSLLVSL), and 407–427 (LIEMMSIGTLLAYTLVSVCVL). Phosphoserine is present on residues Ser465, Ser468, and Ser488. 4 helical membrane-spanning segments follow: residues 565–585 (VTICVLLLFILMFVFCSFIIF), 596–616 (WAILLVVLMVLLISALVFVIL), 628–648 (MAPCLPFVPAFAMLVNIYLML), and 655–675 (WIRFAVWCFVGMLIYFGYGIW). Asn676 carries an N-linked (GlcNAc...) asparagine glycan. Residues 712–771 (TEGESQENWGGPAEDKGFYYQQMSDTQPNTRTSSKAKSKSKHKQNSEALIANDELDYSPE) form a disordered region. Positions 732-743 (QQMSDTQPNTRT) are enriched in polar residues. Over residues 745-754 (SKAKSKSKHK) the composition is skewed to basic residues. Phosphoserine is present on residues Ser757 and Ser769.

The protein belongs to the amino acid-polyamine-organocation (APC) superfamily. Cationic amino acid transporter (CAT) (TC 2.A.3.3) family.

The protein resides in the lysosome membrane. It catalyses the reaction 4-aminobutanoate(in) = 4-aminobutanoate(out). Functionally, imports 4-aminobutanoate (GABA) into lysosomes. May act as a GABA sensor that regulates mTORC2-dependent INS signaling and gluconeogenesis. The transport mechanism and substrate selectivity remain to be elucidated. The protein is Solute carrier family 7 member 14 of Bos taurus (Bovine).